The primary structure comprises 1076 residues: Carbamoyl phosphate synthase large chain (1076 aa).

A carboxyphosphate synthetic domain region spans residues 1 to 402; the sequence is MPKREDIRKI…ALQKAIRSLE (402 aa). R129, R169, G175, G176, E208, V210, E215, G241, V242, H243, Q285, and E299 together coordinate ATP. In terms of domain architecture, ATP-grasp 1 spans 133–328; the sequence is KEAMRKIGLD…IAKIAAKLAV (196 aa). Mg(2+) contacts are provided by Q285, E299, and N301. Mn(2+) contacts are provided by Q285, E299, and N301. Positions 403–555 are oligomerization domain; it reads IGRYGLGCDG…YSTYEDENEA (153 aa). The carbamoyl phosphate synthetic domain stretch occupies residues 556 to 939; it reads LRSERKKVMI…YKAELAAGMK (384 aa). Residues 680-871 enclose the ATP-grasp 2 domain; sequence AELLERLNIP…LAKIAAKLMM (192 aa). ATP contacts are provided by R716, K755, L757, E762, G787, V788, H789, S790, Q830, and E842. Residues Q830, E842, and N844 each contribute to the Mg(2+) site. Mn(2+)-binding residues include Q830, E842, and N844. The region spanning 938–1076 is the MGS-like domain; it reads MKLPLKGTVF…KSIQEYHEES (139 aa). The interval 940–1076 is allosteric domain; that stretch reads LPLKGTVFIS…KSIQEYHEES (137 aa).

This sequence belongs to the CarB family. Composed of two chains; the small (or glutamine) chain promotes the hydrolysis of glutamine to ammonia, which is used by the large (or ammonia) chain to synthesize carbamoyl phosphate. Tetramer of heterodimers (alpha,beta)4. It depends on Mg(2+) as a cofactor. Requires Mn(2+) as cofactor.

The catalysed reaction is hydrogencarbonate + L-glutamine + 2 ATP + H2O = carbamoyl phosphate + L-glutamate + 2 ADP + phosphate + 2 H(+). It catalyses the reaction hydrogencarbonate + NH4(+) + 2 ATP = carbamoyl phosphate + 2 ADP + phosphate + 2 H(+). It functions in the pathway amino-acid biosynthesis; L-arginine biosynthesis; carbamoyl phosphate from bicarbonate: step 1/1. The protein operates within pyrimidine metabolism; UMP biosynthesis via de novo pathway; (S)-dihydroorotate from bicarbonate: step 1/3. Its function is as follows. Large subunit of the glutamine-dependent carbamoyl phosphate synthetase (CPSase). CPSase catalyzes the formation of carbamoyl phosphate from the ammonia moiety of glutamine, carbonate, and phosphate donated by ATP, constituting the first step of 2 biosynthetic pathways, one leading to arginine and/or urea and the other to pyrimidine nucleotides. The large subunit (synthetase) binds the substrates ammonia (free or transferred from glutamine from the small subunit), hydrogencarbonate and ATP and carries out an ATP-coupled ligase reaction, activating hydrogencarbonate by forming carboxy phosphate which reacts with ammonia to form carbamoyl phosphate. In Archaeoglobus fulgidus (strain ATCC 49558 / DSM 4304 / JCM 9628 / NBRC 100126 / VC-16), this protein is Carbamoyl phosphate synthase large chain.